The sequence spans 303 residues: Sulfotransferase 6B1 (303 aa).

Residue 65–70 (KCGSNW) participates in 3'-phosphoadenylyl sulfate binding. The active-site Proton acceptor is H118. 3'-phosphoadenylyl sulfate is bound by residues R140, S148, Y203, 237–242 (STFQAM), and 259–261 (RKG).

This sequence belongs to the sulfotransferase 1 family.

It localises to the cytoplasm. It is found in the cytosol. The catalysed reaction is thyroxine + 3'-phosphoadenylyl sulfate = thyroxine sulfate + adenosine 3',5'-bisphosphate + H(+). Its function is as follows. Sulfotransferase that utilizes 3'-phospho-5'-adenylyl sulfate (PAPS) as sulfonate donor to catalyze the sulfate conjugation of thyroxine. Involved in the metabolism of thyroxine. In Pan troglodytes (Chimpanzee), this protein is Sulfotransferase 6B1 (SULT6B1).